The chain runs to 115 residues: Basic leucine zipper transcriptional factor ATF-like (115 aa).

A disordered region spans residues 1–57; the sequence is MQQEPDRNEQGYCSSPPSSNKQDSSDDTKKIQRREKNRIAAQKSRQRQTQKADSLHI. In terms of domain architecture, bZIP spans 27 to 90; the sequence is DTKKIQRREK…KYLTCVLSTH (64 aa). A basic motif region spans residues 29-51; it reads KKIQRREKNRIAAQKSRQRQTQK. Residues 55–83 form a leucine-zipper region; the sequence is LHIESENLERLNSALRGEISGLREELKYL.

Belongs to the bZIP family.

The protein localises to the nucleus. Its subcellular location is the cytoplasm. In terms of biological role, AP-1 family transcription factor that controls the differentiation of lineage-specific cells in the immune system: specifically mediates the differentiation of T-helper 17 cells (Th17), follicular T-helper cells (TfH), CD8(+) dendritic cells and class-switch recombination (CSR) in B-cells. The protein is Basic leucine zipper transcriptional factor ATF-like (batf) of Xenopus tropicalis (Western clawed frog).